The sequence spans 272 residues: Putative hydro-lyase RPD_1846 (272 aa).

It belongs to the D-glutamate cyclase family.

This is Putative hydro-lyase RPD_1846 from Rhodopseudomonas palustris (strain BisB5).